The following is a 368-amino-acid chain: RNA polymerase sigma factor SigA (368 aa).

The tract at residues 60–86 is disordered; it reads VVDENGDPSEHSLKKDEKEAEKAQAED. Positions 67-84 are enriched in basic and acidic residues; sequence PSEHSLKKDEKEAEKAQA. Residues 135-205 are sigma-70 factor domain-2; sequence LAEANLRLVV…TRAIADQART (71 aa). The Interaction with polymerase core subunit RpoC motif lies at 159–162; that stretch reads DLIQ. Positions 214-290 are sigma-70 factor domain-3; sequence ETINKLIRIQ…DQDATSPAEH (77 aa). The interval 303–356 is sigma-70 factor domain-4; that stretch reads VLDTLTDREENVLRLRFGLDDGRTRTLEEVGKVFGVTRERIRQIEAKALRKLRH. Residues 329 to 348 constitute a DNA-binding region (H-T-H motif); that stretch reads LEEVGKVFGVTRERIRQIEA.

Belongs to the sigma-70 factor family. RpoD/SigA subfamily. As to quaternary structure, interacts transiently with the RNA polymerase catalytic core.

The protein resides in the cytoplasm. Its function is as follows. Sigma factors are initiation factors that promote the attachment of RNA polymerase to specific initiation sites and are then released. This sigma factor is the primary sigma factor during exponential growth. The polypeptide is RNA polymerase sigma factor SigA (Enterococcus faecalis (strain ATCC 700802 / V583)).